We begin with the raw amino-acid sequence, 453 residues long: UDP-glycosyltransferase 76E1 (453 aa).

UDP-alpha-D-glucose is bound by residues Ser272, 331–333 (APQ), 348–356 (HCGWNSTLE), and 370–373 (TGDQ).

It belongs to the UDP-glycosyltransferase family.

Functionally, possesses low quercetin 3-O-glucosyltransferase and 7-O-glucosyltransferase activities in vitro. This chain is UDP-glycosyltransferase 76E1 (UGT76E1), found in Arabidopsis thaliana (Mouse-ear cress).